The sequence spans 325 residues: 5-dehydro-2-deoxygluconokinase (325 aa).

The protein belongs to the carbohydrate kinase PfkB family.

It catalyses the reaction 5-dehydro-2-deoxy-D-gluconate + ATP = 6-phospho-5-dehydro-2-deoxy-D-gluconate + ADP + H(+). The protein operates within polyol metabolism; myo-inositol degradation into acetyl-CoA; acetyl-CoA from myo-inositol: step 5/7. In terms of biological role, catalyzes the phosphorylation of 5-dehydro-2-deoxy-D-gluconate (2-deoxy-5-keto-D-gluconate or DKG) to 6-phospho-5-dehydro-2-deoxy-D-gluconate (DKGP). The chain is 5-dehydro-2-deoxygluconokinase from Listeria innocua serovar 6a (strain ATCC BAA-680 / CLIP 11262).